Reading from the N-terminus, the 1224-residue chain is DNA-directed RNA polymerase subunit beta'' (1224 aa).

Residues Cys233, Cys308, Cys315, and Cys318 each contribute to the Zn(2+) site.

This sequence belongs to the RNA polymerase beta' chain family. RpoC2 subfamily. In terms of assembly, in plastids the minimal PEP RNA polymerase catalytic core is composed of four subunits: alpha, beta, beta', and beta''. When a (nuclear-encoded) sigma factor is associated with the core the holoenzyme is formed, which can initiate transcription. Zn(2+) serves as cofactor.

It localises to the plastid. The protein resides in the chloroplast. The catalysed reaction is RNA(n) + a ribonucleoside 5'-triphosphate = RNA(n+1) + diphosphate. Functionally, DNA-dependent RNA polymerase catalyzes the transcription of DNA into RNA using the four ribonucleoside triphosphates as substrates. The sequence is that of DNA-directed RNA polymerase subunit beta'' from Pinus thunbergii (Japanese black pine).